A 1349-amino-acid polypeptide reads, in one-letter code: MACYLVISSRHLSNGHYRGIKGVFRGPLCKNGSPSPDFAEKKSTAKALEDVKANFYCELCDKQYHKHQEFDNHINSYDHAHKQRLKELKQREFARNVASKSWKDEKKQEKALKRLHQLAELRQQSECVSGNGPAYKAPRVAIEKQLQQGIFPIKNGRKVSCMKSALLLKGKNLPRIISDKQRSTMPNRHQLQSDRRCLFGNQVLQTSSDLSNANHRTGVSFTFSKKVHLKLESSASVFSENTEETHDCNKSPIYKTKQTADKCKCCRFANKDTHLTKEKEVNISPSHLESVLHNTISINSKILQDKHDSIDETLEDSIGIHASFSKSNIHLSDVDFTPTSREKETRNTLKNTLENCVNHPCQANASFSPPNIYNHSDARISECLDEFSSLEPSEQKSTVHLNPNSRIENREKSLDKTERVSKNVQRLVKEACTHNVASKPLPFLHVQSKDGHTTLQWPTELLLFTKTEPCISYGCNPLYFDFKLSRNTKEDHNLEDLKTELGKKPLELKTKRESQVSGLTEDQQKLIQEDYQYPKPKTMIANPDWEKFQRKYNLDYSDSEPNKSEYTFSANDLEMKNPKVPLYLNTSLKDCAGKNNSSENKLKEASRAHWQGCRKAVLNDIDEDLSFPSYISRFKKHKLIPCSPHLEFEDERQFNCKSSPCTVGGHSDHGKDFSVILKSNHISMTSKVSGCGNQRYKRYSPQSCLSRYSSSLDTSPSSMSSLRSTCSSHRFNGNSRGNLLCFHKREHHSVERHKRKCLKHNCFYLSDDITKSSQMQSEPQKERNCKLWESFKNEKYSKRRYCHCRERQKLGKNQQQFSGLKSTRIIYCDSNSQISCTGSSKKPPNCQGTQHDRLDSYSIEKMYYLNKSKRNQESLGSPHICDLGKVRPMKCNSGNISCLLKNCSSGPSETTESNTAEGERTPLTAKILLERVQAKKCQEQSSNVEISSNSCKSELEAPSQVPCTIQLAPSGCNRQALPLSEKIQYASESRNDQDSAIPRTTEKDKSKSSHTNNFTILADTDCDNHLSKGIIHLVTESQSLNIKRDATTKEQSKPLISEIQPFIQSCDPVPNEFPGAFPSNKYTGVTDSTETQEDQINLDLQDVSMHINHVEGNINSYYDRTMQKPDKVEDGLEMCHKSISPPLIQQPITFSPDEIDKYKILQLQAQQHMQKQLLSKHLRVLPAAGPTAFSPASTVQTVPVHQHTSITTIHHTFLQHFAVSASLSSHSSHLPIAHLHPLSQAHFSPISFSTLTPTIIPAHPTFLAGHPLHLVAATPFHPSHITLQPLPPTAFIPTLFGPHLNPATTSIIHLNPLIQPVFQGQDFCHHSCSSQMQQLNEVKEALNVSTHLN.

A C2H2-type zinc finger spans residues 55–79 (FYCELCDKQYHKHQEFDNHINSYDH). A disordered region spans residues 985–1010 (YASESRNDQDSAIPRTTEKDKSKSSH).

In Homo sapiens (Human), this protein is Zinc finger protein 804B (ZNF804B).